Here is a 252-residue protein sequence, read N- to C-terminus: MLLIKSIPAFNDNYIWLIHNNDNHCVVVDPGEAAPVLACLKEHGLILDAILITHHHHDHIGGVPELVRQFPNINVVGPENEPIPTLTHPVGDGDFVELFNEKFMVLGVEGHTKGHIAYIGDEKLFCGDTLFSAGCGRLFEGTAEQMFHSLQKLAALPDETEVYCAHEYTASNLAFALAVEPDNDYLQQYREKVLRLRANGKATIPTTMQREKLINPFLRTSEASVKQAVSSKVENDSEVATFAALRRWKDEF.

7 residues coordinate Zn(2+): histidine 54, histidine 56, aspartate 58, histidine 59, histidine 111, aspartate 128, and histidine 166.

It belongs to the metallo-beta-lactamase superfamily. Glyoxalase II family. Monomer. The cofactor is Zn(2+).

The enzyme catalyses an S-(2-hydroxyacyl)glutathione + H2O = a 2-hydroxy carboxylate + glutathione + H(+). It participates in secondary metabolite metabolism; methylglyoxal degradation; (R)-lactate from methylglyoxal: step 2/2. Functionally, thiolesterase that catalyzes the hydrolysis of S-D-lactoyl-glutathione to form glutathione and D-lactic acid. In Aliivibrio salmonicida (strain LFI1238) (Vibrio salmonicida (strain LFI1238)), this protein is Hydroxyacylglutathione hydrolase.